The chain runs to 304 residues: Probable cobalamin biosynthesis protein CobD (304 aa).

Helical transmembrane passes span 2–22 (IVVL…KEYI), 50–70 (ILFS…AVYL), 73–93 (FILV…FSIT), 147–167 (VDGY…GAFI), and 284–304 (AAYS…AVFL).

It belongs to the CobD/CbiB family.

Its subcellular location is the cell membrane. Its pathway is cofactor biosynthesis; adenosylcobalamin biosynthesis. Its function is as follows. Converts cobyric acid to cobinamide by the addition of aminopropanol on the F carboxylic group. This Thermoplasma volcanium (strain ATCC 51530 / DSM 4299 / JCM 9571 / NBRC 15438 / GSS1) protein is Probable cobalamin biosynthesis protein CobD.